The primary structure comprises 477 residues: Maternal protein exuperantia-2 (477 aa).

Residues 196 to 209 (KDGNSTKEDEHENP) show a composition bias toward basic and acidic residues. Disordered stretches follow at residues 196 to 226 (KDGN…NQKQ) and 384 to 477 (TIKP…FADI). Basic residues predominate over residues 385-402 (IKPRCKRSGNGTRRRNRA).

Ensures the proper localization of the mRNA of the bicoid gene to the anterior regions of the oocyte thus playing a fundamental role in the establishment of the polarity of the oocyte. May bind the bcd mRNA. The protein is Maternal protein exuperantia-2 (exu2) of Drosophila pseudoobscura pseudoobscura (Fruit fly).